The following is a 60-amino-acid chain: Large ribosomal subunit protein bL33 (60 aa).

This sequence belongs to the bacterial ribosomal protein bL33 family.

This Chlorobium luteolum (strain DSM 273 / BCRC 81028 / 2530) (Pelodictyon luteolum) protein is Large ribosomal subunit protein bL33.